Reading from the N-terminus, the 359-residue chain is MMP endo-(1,4)-3-O-methyl-alpha-D-mannosidase (359 aa).

In terms of assembly, monomer in solution.

The enzyme catalyses Endohydrolysis of 3-O-methyl-alpha-D-mannosyl-(1-&gt;4)-3-O-methyl-D-mannose linkages within (1,4)-3-O-methyl-alpha-D-mannnan substrates.. In terms of biological role, hydrolase involved in the biosynthesis of 3-O-methylmannose polysaccharides (MMP), which are intracellular polymethylated polysaccharides implicated in the modulation of fatty acid metabolism in non-tuberculous mycobacteria. Highly specific hydrolase that catalyzes the internal cleavage of MMP. Is able to hydrolyze purified MMP into distinct lower order oligomannosides but does not cleave acylated or deacylated forms of 6-O-methylglucose lipopolysaccharide (MGLP), beta-mannans, synthetic 4alpha-oligomannosides or its own reaction products. Products were identified as four distinct oligomannosides differing in the number of mannose units (4 to 8) and methylation pattern (free or methylated C1-OH). Might serve as a recycling enzyme that hydrolyzes mature MMP into defined-size smaller oligomannosides that are, in turn, substrates for ManT and MeT1 activities for further processing into new daughter MMP chains. In Mycolicibacterium hassiacum (strain DSM 44199 / CIP 105218 / JCM 12690 / 3849) (Mycobacterium hassiacum), this protein is MMP endo-(1,4)-3-O-methyl-alpha-D-mannosidase.